The following is a 223-amino-acid chain: N-terminal Xaa-Pro-Lys N-methyltransferase 1 (223 aa).

Methionine 1 carries the N-acetylmethionine modification. Threonine 2 bears the N-acetylthreonine; in N-terminal Xaa-Pro-Lys N-methyltransferase 1, N-terminally processed mark. Residues glycine 69, arginine 74, aspartate 91 to threonine 93, leucine 119 to glutamine 120, and glutamine 135 contribute to the S-adenosyl-L-methionine site.

The protein belongs to the methyltransferase superfamily. NTM1 family.

Its subcellular location is the nucleus. It carries out the reaction N-terminal L-alanyl-L-prolyl-L-lysyl-[protein] + 3 S-adenosyl-L-methionine = N-terminal N,N,N-trimethyl-L-alanyl-L-prolyl-L-lysyl-[protein] + 3 S-adenosyl-L-homocysteine + 3 H(+). It catalyses the reaction N-terminal L-seryl-L-prolyl-L-lysyl-[protein] + 3 S-adenosyl-L-methionine = N-terminal N,N,N-trimethyl-L-seryl-L-prolyl-L-lysyl-[protein] + 3 S-adenosyl-L-homocysteine + 3 H(+). The enzyme catalyses N-terminal L-prolyl-L-prolyl-L-lysyl-[protein] + 2 S-adenosyl-L-methionine = N-terminal N,N-dimethyl-L-prolyl-L-prolyl-L-lysyl-[protein] + 2 S-adenosyl-L-homocysteine + 2 H(+). Functionally, distributive alpha-N-methyltransferase that methylates the N-terminus of target proteins containing the N-terminal motif [Ala/Gly/Pro/Ser]-Pro-Lys when the initiator Met is cleaved. Specifically catalyzes mono-, di- or tri-methylation of the exposed alpha-amino group of the Ala, Gly or Ser residue in the [Ala/Gly/Ser]-Pro-Lys motif and mono- or di-methylation of Pro in the Pro-Pro-Lys motif. Some of the substrates may be primed by NTMT2-mediated monomethylation. Catalyzes the trimethylation of the N-terminal Gly in CENPA (after removal of Met-1). Responsible for the N-terminal methylation of KLHL31, MYL2, MYL3, RB1, RCC1, RPL23A and SET. Required during mitosis for normal bipolar spindle formation and chromosome segregation via its action on RCC1. The protein is N-terminal Xaa-Pro-Lys N-methyltransferase 1 (NTMT1) of Homo sapiens (Human).